The chain runs to 780 residues: Subtilisin-like protease SBT5.1 (780 aa).

The N-terminal stretch at 1-25 (MMRCLTITIMFFMFFFLSVIQKCKS) is a signal peptide. Residues 26-106 (ETSKSGDYII…VFPDQMLQLH (81 aa)) constitute a propeptide, activation peptide. Residues 33–106 (YIIYMGAASS…VFPDQMLQLH (74 aa)) enclose the Inhibitor I9 domain. Residues 110–617 (SWDFLVQESY…AGQVTIFGPS (508 aa)) form the Peptidase S8 domain. The active-site Charge relay system is the Asp-147. An N-linked (GlcNAc...) asparagine glycan is attached at Asn-197. His-215 serves as the catalytic Charge relay system. N-linked (GlcNAc...) asparagine glycosylation occurs at Asn-230. Residues 385–469 (IDANEEAARN…PEDGIQIMSY (85 aa)) enclose the PA domain. N-linked (GlcNAc...) asparagine glycosylation occurs at Asn-471. The active-site Charge relay system is Ser-550. Asn-776 carries N-linked (GlcNAc...) asparagine glycosylation.

It belongs to the peptidase S8 family.

The protein localises to the secreted. The sequence is that of Subtilisin-like protease SBT5.1 from Arabidopsis thaliana (Mouse-ear cress).